The following is a 395-amino-acid chain: Phosphoribulokinase, chloroplastic (395 aa).

The N-terminal 46 residues, 1 to 46, are a transit peptide targeting the chloroplast; the sequence is MAVSTIYSTQALNSTHFLTSSSSSKQVFLYRRQPQTNRRFNTLITC. A disulfide bridge links Cys-61 with Cys-100.

It belongs to the phosphoribulokinase family.

The protein localises to the plastid. It is found in the chloroplast. It catalyses the reaction D-ribulose 5-phosphate + ATP = D-ribulose 1,5-bisphosphate + ADP + H(+). The protein operates within carbohydrate biosynthesis; Calvin cycle. With respect to regulation, light regulated via thioredoxin by reversible oxidation/reduction of sulfhydryl/disulfide groups. The polypeptide is Phosphoribulokinase, chloroplastic (Arabidopsis thaliana (Mouse-ear cress)).